The following is a 515-amino-acid chain: Integrator complex subunit 14 (515 aa).

The VWFA domain occupies 2–204 (PTVVVMDVSL…KNVQSMFGKL (203 aa)). Positions 10, 12, and 86 each coordinate Mg(2+). K418 carries the N6-acetyllysine modification.

Belongs to the Integrator subunit 14 family. Component of the Integrator complex, composed of core subunits INTS1, INTS2, INTS3, INTS4, INTS5, INTS6, INTS7, INTS8, INTS9/RC74, INTS10, INTS11/CPSF3L, INTS12, INTS13, INTS14 and INTS15. The core complex associates with protein phosphatase 2A subunits PPP2CA and PPP2R1A, to form the Integrator-PP2A (INTAC) complex. INTS14 is part of the tail subcomplex, composed of INTS10, INTS13, INTS14 and INTS15.

The protein localises to the nucleus. Functionally, component of the integrator complex, a multiprotein complex that terminates RNA polymerase II (Pol II) transcription in the promoter-proximal region of genes. The integrator complex provides a quality checkpoint during transcription elongation by driving premature transcription termination of transcripts that are unfavorably configured for transcriptional elongation: the complex terminates transcription by (1) catalyzing dephosphorylation of the C-terminal domain (CTD) of Pol II subunit POLR2A/RPB1 and SUPT5H/SPT5, (2) degrading the exiting nascent RNA transcript via endonuclease activity and (3) promoting the release of Pol II from bound DNA. The integrator complex is also involved in terminating the synthesis of non-coding Pol II transcripts, such as enhancer RNAs (eRNAs), small nuclear RNAs (snRNAs), telomerase RNAs and long non-coding RNAs (lncRNAs). Within the integrator complex, INTS14 is part of the integrator tail module that acts as a platform for the recruitment of transcription factors at promoters. The sequence is that of Integrator complex subunit 14 from Rattus norvegicus (Rat).